The following is a 204-amino-acid chain: Putative glutathione S-transferase alpha-3 (204 aa).

Position 2 is an N-acetylthreonine (Thr-2). Residues 2 to 79 (TKPQLSYFKV…YIASQHDFVG (78 aa)) enclose the GST N-terminal domain. Residues Tyr-8, 49-50 (QL), and 63-64 (QS) each bind glutathione. In terms of domain architecture, GST C-terminal spans 81–202 (TPEEKALVDE…YLKNRPITER (122 aa)).

This sequence belongs to the GST superfamily. Alpha family.

The catalysed reaction is RX + glutathione = an S-substituted glutathione + a halide anion + H(+). Functionally, conjugation of reduced glutathione to a wide number of exogenous and endogenous hydrophobic electrophiles. This is Putative glutathione S-transferase alpha-3 (gsta3) from Dictyostelium discoideum (Social amoeba).